Reading from the N-terminus, the 182-residue chain is Transcription termination/antitermination protein NusG (182 aa).

Belongs to the NusG family.

In terms of biological role, participates in transcription elongation, termination and antitermination. This chain is Transcription termination/antitermination protein NusG, found in Chlamydia pneumoniae (Chlamydophila pneumoniae).